The sequence spans 196 residues: Secreted effector protein SseB (196 aa).

This sequence belongs to the EspA/SseB family. May form a complex with SseC and SseD. Binds to the chaperone SseA.

The protein localises to the secreted. It localises to the cell surface. Its function is as follows. Effector proteins function to alter host cell physiology and promote bacterial survival in host tissues. May act as a translocator that mediates translocation of SPI-2 T3SS effector proteins from intraphagosomal bacterial cells into the host cells. SseB is required for correct localization of SseC and SseD on the bacterial cell surface. The chain is Secreted effector protein SseB (sseB) from Salmonella typhimurium (strain LT2 / SGSC1412 / ATCC 700720).